The sequence spans 328 residues: L-asparaginase (328 aa).

The 320-residue stretch at 1–320 (MKLLVLGTGG…EEIRKIMERN (320 aa)) folds into the Asparaginase/glutaminase domain. T11 serves as the catalytic Nucleophile; O-isoaspartyl threonine intermediate. Residues T11, D53, S54, T85, and D86 each coordinate L-aspartate. Catalysis depends on charge relay system residues T85, D86, K156, and Y274.

It belongs to the asparaginase 1 family. Homodimer.

The enzyme catalyses L-asparagine + H2O = L-aspartate + NH4(+). Its activity is regulated as follows. Chohan et al. found that divalent metal ions and EDTA do not have any significant effect on enzyme activity, indicating that activity is independent of metal ions. In another study, Hong et al. showed that activity is enhanced by Mg(2+), significantly inhibited by Co(2+) and Ni(2+), and moderately inhibited by Ca(2+), Cu(2+) and EDTA. Unfolding studies suggest that urea cannot induce complete unfolding and inactivation of the enzyme even at a concentration 8 M. However, in the presence of 4 M guanidine hydrochloride, the enzyme structure is unfolded with complete loss of enzyme activity. Its function is as follows. Catalyzes the hydrolysis of L-asparagine into L-aspartate and ammonia. Also displays D-asparaginase activity, which is about 50% of the L-asparaginase activity. Does not exhibit glutaminase activity. This chain is L-asparaginase, found in Thermococcus kodakarensis (strain ATCC BAA-918 / JCM 12380 / KOD1) (Pyrococcus kodakaraensis (strain KOD1)).